We begin with the raw amino-acid sequence, 120 residues long: NAD(P)H-quinone oxidoreductase subunit 3, chloroplastic (120 aa).

3 helical membrane-spanning segments follow: residues 9-29, 64-84, and 88-108; these read IFWA…LISG, MFAL…PWAV, and ILGV…VVGS.

This sequence belongs to the complex I subunit 3 family. NDH is composed of at least 16 different subunits, 5 of which are encoded in the nucleus.

The protein resides in the plastid. It is found in the chloroplast thylakoid membrane. It carries out the reaction a plastoquinone + NADH + (n+1) H(+)(in) = a plastoquinol + NAD(+) + n H(+)(out). It catalyses the reaction a plastoquinone + NADPH + (n+1) H(+)(in) = a plastoquinol + NADP(+) + n H(+)(out). In terms of biological role, NDH shuttles electrons from NAD(P)H:plastoquinone, via FMN and iron-sulfur (Fe-S) centers, to quinones in the photosynthetic chain and possibly in a chloroplast respiratory chain. The immediate electron acceptor for the enzyme in this species is believed to be plastoquinone. Couples the redox reaction to proton translocation, and thus conserves the redox energy in a proton gradient. The sequence is that of NAD(P)H-quinone oxidoreductase subunit 3, chloroplastic from Nymphaea alba (White water-lily).